Reading from the N-terminus, the 448-residue chain is tRNA(Ile)-lysidine synthase (448 aa).

25-30 provides a ligand contact to ATP; that stretch reads SGGSDS.

The protein belongs to the tRNA(Ile)-lysidine synthase family.

It is found in the cytoplasm. It carries out the reaction cytidine(34) in tRNA(Ile2) + L-lysine + ATP = lysidine(34) in tRNA(Ile2) + AMP + diphosphate + H(+). In terms of biological role, ligates lysine onto the cytidine present at position 34 of the AUA codon-specific tRNA(Ile) that contains the anticodon CAU, in an ATP-dependent manner. Cytidine is converted to lysidine, thus changing the amino acid specificity of the tRNA from methionine to isoleucine. This chain is tRNA(Ile)-lysidine synthase, found in Brucella canis (strain ATCC 23365 / NCTC 10854 / RM-666).